The chain runs to 219 residues: Dynein light chain Tctex-type 4 (219 aa).

Residues 1-84 (MACRTLPSRR…RRPSLGPVPP (84 aa)) form a disordered region. A compositionally biased stretch (basic and acidic residues) spans 9–20 (RRQEEETTKDLA). At S64 the chain carries Phosphoserine.

It belongs to the dynein light chain Tctex-type family. In terms of assembly, interacts with ENG/endoglin, TGFBR2 and TGFBR3. Interacts with PPP1CC.

Its subcellular location is the cell projection. The protein resides in the cilium. The protein localises to the flagellum. It localises to the cytoplasmic vesicle. It is found in the secretory vesicle. Its subcellular location is the acrosome. The protein resides in the cytoplasm. The protein localises to the cytoskeleton. It localises to the cilium axoneme. It is found in the nucleus. Its subcellular location is the microtubule organizing center. The chain is Dynein light chain Tctex-type 4 (Dynlt4) from Mus musculus (Mouse).